Reading from the N-terminus, the 178-residue chain is UPF0114 protein HPSH_00970 (178 aa).

A run of 4 helical transmembrane segments spans residues 15-35, 54-74, 102-122, and 145-165; these read WLLA…GYVF, LVLS…VLMV, FNAL…IFLL, and PIFW…LAAV.

It belongs to the UPF0114 family.

Its subcellular location is the cell membrane. The polypeptide is UPF0114 protein HPSH_00970 (Helicobacter pylori (strain Shi470)).